The following is a 248-amino-acid chain: Ubiquinone/menaquinone biosynthesis C-methyltransferase UbiE (248 aa).

Residues S68 and D92 each coordinate S-adenosyl-L-methionine.

It belongs to the class I-like SAM-binding methyltransferase superfamily. MenG/UbiE family.

The enzyme catalyses a 2-demethylmenaquinol + S-adenosyl-L-methionine = a menaquinol + S-adenosyl-L-homocysteine + H(+). It carries out the reaction a 2-methoxy-6-(all-trans-polyprenyl)benzene-1,4-diol + S-adenosyl-L-methionine = a 5-methoxy-2-methyl-3-(all-trans-polyprenyl)benzene-1,4-diol + S-adenosyl-L-homocysteine + H(+). The protein operates within quinol/quinone metabolism; menaquinone biosynthesis; menaquinol from 1,4-dihydroxy-2-naphthoate: step 2/2. It participates in cofactor biosynthesis; ubiquinone biosynthesis. Methyltransferase required for the conversion of demethylmenaquinol (DMKH2) to menaquinol (MKH2) and the conversion of 2-polyprenyl-6-methoxy-1,4-benzoquinol (DDMQH2) to 2-polyprenyl-3-methyl-6-methoxy-1,4-benzoquinol (DMQH2). The polypeptide is Ubiquinone/menaquinone biosynthesis C-methyltransferase UbiE (Rickettsia bellii (strain OSU 85-389)).